Reading from the N-terminus, the 439-residue chain is Phenylacetate-coenzyme A ligase (439 aa).

Belongs to the phenylacetyl-CoA ligase family. Monomer.

It catalyses the reaction 2-phenylacetate + ATP + CoA = phenylacetyl-CoA + AMP + diphosphate. It participates in aromatic compound metabolism; phenylacetate degradation. Inhibited by divalent cations (zinc, copper, mercury) and by the sulfhydryl reagents 5,5-dithiobis(2-nitrobenzoic acid), N-ethylmaleimide and p-chloromercuribenzoate. In terms of biological role, catalyzes the activation of phenylacetic acid (PA) to phenylacetyl-CoA (PA-CoA). Involved in the phenylalanine metabolism. Can also use CTP and UTP as substrate. In Pseudomonas putida (Arthrobacter siderocapsulatus), this protein is Phenylacetate-coenzyme A ligase (paaK).